A 663-amino-acid polypeptide reads, in one-letter code: Protein THEMIS2 (663 aa).

2 CABIT regions span residues 2–237 (EPVP…TASS) and 238–515 (QHIH…EAEG). The disordered stretch occupies residues 545–663 (ASESQAPPPR…DMDDHDYEEI (119 aa)). Over residues 559–577 (QGINKKQQNIQSCKESSVK) the composition is skewed to polar residues. Phosphothreonine is present on Thr-596. Residues 621-641 (NPQTQNSVLSMKPKTSSSLGK) are compositionally biased toward polar residues. Positions 653–663 (PDMDDHDYEEI) are enriched in acidic residues. Residue Tyr-660 is modified to Phosphotyrosine.

It belongs to the themis family. Interacts with VAV1. Interacts with LAT. Interacts constitutively with GRB2, LYN and PLCG2; these interactions increase the activation of PLCG2 and its downstream pathways following B cell receptor stimulation. Post-translationally, phosphorylation at Tyr-660 is induced by LPS. Phosphorylated by Src kinases (Lck or Fyn) following BCR engagement. As to expression, expressed in both developing and mature B-cells with high expression in immature, follicular and B1 B cells. Also expressed in macrophages and dendritic cells. Down-regulated in splenocytes of mice developing arthritis in a collagen-induced model, not in those of mice failing to develop the disease. Transiently down-regulated in splenocytes of mice infected with influenza virus.

It localises to the nucleus. The protein resides in the cytoplasm. Functionally, may constitute a control point in macrophage inflammatory response, promoting LPS-induced TLR4-mediated TNF production. Determines the threshold for activation of B cells by low-affinity and low-avidity ligands via PLCG2 activation and its downstream pathways. The polypeptide is Protein THEMIS2 (Mus musculus (Mouse)).